Consider the following 219-residue polypeptide: Adenylate kinase (219 aa).

10 to 15 serves as a coordination point for ATP; the sequence is GAGKGT. The segment at 30 to 59 is NMP; it reads ATGDLFRANISQGTDLGKQARAYMDAGQLV. AMP is bound by residues Thr31, Arg36, 57-59, 85-88, and Gln92; these read QLV and GFPR. The interval 126–164 is LID; sequence GRRVCRNNSAHVFHLTYNPPKAEGVCDACGGELYQRDDD. Residues Arg127 and 137–138 contribute to the ATP site; that span reads VF. AMP-binding residues include Arg161 and Arg172. Residue Gly200 participates in ATP binding.

This sequence belongs to the adenylate kinase family. Monomer.

It localises to the cytoplasm. It catalyses the reaction AMP + ATP = 2 ADP. The protein operates within purine metabolism; AMP biosynthesis via salvage pathway; AMP from ADP: step 1/1. Its function is as follows. Catalyzes the reversible transfer of the terminal phosphate group between ATP and AMP. Plays an important role in cellular energy homeostasis and in adenine nucleotide metabolism. The protein is Adenylate kinase of Streptomyces griseus subsp. griseus (strain JCM 4626 / CBS 651.72 / NBRC 13350 / KCC S-0626 / ISP 5235).